The chain runs to 319 residues: DNA-directed RNA polymerases II, IV and V subunit 3 (319 aa).

N-acetylmethionine is present on M1.

Belongs to the archaeal Rpo3/eukaryotic RPB3 RNA polymerase subunit family. Component of the RNA polymerase II complex consisting of at least 12 subunits. Interacts with SHH1, CLSY1, NRPB11 and NRPD1. Interacts with IYO.

Its subcellular location is the nucleus. Functionally, DNA-dependent RNA polymerase catalyzes the transcription of DNA into RNA using the four ribonucleoside triphosphates as substrates. Component of RNA polymerase II which synthesizes mRNA precursors and many functional non-coding RNAs. Pol II is the central component of the basal RNA polymerase II transcription machinery. It is composed of mobile elements that move relative to each other. NRPB3 is part of the core element with the central large cleft and the clamp element that moves to open and close the cleft. Component of RNA polymerases IV and V which mediate short-interfering RNAs (siRNA) accumulation and subsequent RNA-directed DNA methylation-dependent (RdDM) transcriptional gene silencing (TGS) of endogenous repeated sequences, including transposable elements. This is DNA-directed RNA polymerases II, IV and V subunit 3 (NRPB3) from Arabidopsis thaliana (Mouse-ear cress).